Here is a 226-residue protein sequence, read N- to C-terminus: MQTTTVPMAAAAAVAPSTTTSSSASFKVAAYAWSSCRSSSSPATRLVAAPNHQRPPLVVGAIAGLDPVTAVQLPLTAGNVESVLDQVRPYLTADGGDVALHEIAGNVVRLKLQGACGSCPSSLITIKRGIERRLMEKIPDVAAVEPVTDKETGLELNEENVEKVLNEIRPYLAGTGGGGLQFLMIKGPIVKVRLTGPAAVVRTVRIAVSKKLREKIPSIQIVQLLS.

The N-terminal 76 residues, 1–76 (MQTTTVPMAA…PVTAVQLPLT (76 aa)), are a transit peptide targeting the chloroplast.

Belongs to the NifU family. As to quaternary structure, homodimer; disulfide-linked.

It is found in the plastid. The protein localises to the chloroplast stroma. Functionally, molecular scaffold for [Fe-S] cluster assembly of chloroplastic iron-sulfur proteins. The protein is NifU-like protein 1, chloroplastic (NIFU1) of Oryza sativa subsp. japonica (Rice).